The chain runs to 217 residues: Ribonuclease HII (217 aa).

An RNase H type-2 domain is found at 34-217 (WPVAGTDEAG…RMSFRPLKRD (184 aa)). Residues aspartate 40, glutamate 41, and aspartate 131 each coordinate a divalent metal cation.

The protein belongs to the RNase HII family. It depends on Mn(2+) as a cofactor. Mg(2+) is required as a cofactor.

It is found in the cytoplasm. It catalyses the reaction Endonucleolytic cleavage to 5'-phosphomonoester.. In terms of biological role, endonuclease that specifically degrades the RNA of RNA-DNA hybrids. This is Ribonuclease HII from Agrobacterium fabrum (strain C58 / ATCC 33970) (Agrobacterium tumefaciens (strain C58)).